A 162-amino-acid chain; its full sequence is NADH-quinone oxidoreductase subunit I (162 aa).

4Fe-4S ferredoxin-type domains lie at 54–83 (RRYE…IESE) and 93–122 (TRYD…ETQI). [4Fe-4S] cluster-binding residues include C63, C66, C69, C73, C102, C105, C108, and C112.

It belongs to the complex I 23 kDa subunit family. NDH-1 is composed of 14 different subunits. Subunits NuoA, H, J, K, L, M, N constitute the membrane sector of the complex. It depends on [4Fe-4S] cluster as a cofactor.

It localises to the cell inner membrane. It carries out the reaction a quinone + NADH + 5 H(+)(in) = a quinol + NAD(+) + 4 H(+)(out). Its function is as follows. NDH-1 shuttles electrons from NADH, via FMN and iron-sulfur (Fe-S) centers, to quinones in the respiratory chain. The immediate electron acceptor for the enzyme in this species is believed to be ubiquinone. Couples the redox reaction to proton translocation (for every two electrons transferred, four hydrogen ions are translocated across the cytoplasmic membrane), and thus conserves the redox energy in a proton gradient. The chain is NADH-quinone oxidoreductase subunit I from Burkholderia thailandensis (strain ATCC 700388 / DSM 13276 / CCUG 48851 / CIP 106301 / E264).